The primary structure comprises 352 residues: Ion-translocating oxidoreductase complex subunit D (352 aa).

A run of 5 helical transmembrane segments spans residues 20–40 (IMLL…WFFG), 42–62 (GTLV…ALVL), 78–109 (ALLT…VIIA), 123–143 (PAMI…TSWL), and 148–168 (IAVN…GHTA). Thr187 bears the FMN phosphoryl threonine mark. A run of 5 helical transmembrane segments spans residues 214–234 (ILAG…GLWL), 242–262 (WHIP…GWLF), 267–287 (LAAP…FFIL), 301–321 (LIFG…GGYP), and 322–342 (DGVA…DYYT).

It belongs to the NqrB/RnfD family. In terms of assembly, the complex is composed of six subunits: RsxA, RsxB, RsxC, RsxD, RsxE and RsxG. FMN serves as cofactor.

It localises to the cell inner membrane. Functionally, part of a membrane-bound complex that couples electron transfer with translocation of ions across the membrane. Required to maintain the reduced state of SoxR. The chain is Ion-translocating oxidoreductase complex subunit D from Escherichia coli (strain SE11).